The sequence spans 910 residues: MEEEDEEILSSSDCDDSSDSYKDDSQDSEGENDNPECEDLAVVSLSSDADRKSKNVKDLLRGNLVVQRQPLLPRVLSVSDGAAVCRKPFKPPCSHGYDSTGQLSRRLSARKRFVPWGSSTPVVVALPTKLEASTNIERDEEEEVVCLPPDIEPLVLWQSEEDGMSNVTTIMVHSVLVKFLRPHQREGVQFMFDCVSGLHGSANINGCILADDMGLGKTLQSITLLYTLLCQGFDGTPMVKKAIIVTPTSLVSNWEAEIKKWVGDRIQLIALCESTRDDVLSGIDSFTRPRSALQVLIISYETFRMHSSKFCQSESCDLLICDEAHRLKNDQTLTNRALASLTCKRRVLLSGTPMQNDLEEFFAMVNFTNPGSLGDAAHFRHYYEAPIICGREPTATEEEKNLAADRSAELSSKVNQFILRRTNALLSNHLPPKIIEVVCCKMTTLQSTLYNHFISSKNLKRALADNAKQTKVLAYITALKKLCNHPKLIYDTIKSGNPGTVGFENCLEFFPAEMFSGRSGAWTGGDGAWVELSGKMHVLSRLLANLRRKTDDRIVLVSNYTQTLDLFAQLCRERRYPFLRLDGSTTISKRQKLVNRLNDPTKDEFAFLLSSKAGGCGLNLIGANRLVLFDPDWNPANDKQAAARVWRDGQKKRVYVYRFLSTGTIEEKVYQRQMSKEGLQKVIQHEQTDNSTRQGNLLSTEDLRDLFSFHGDVRSEIHEKMSCSRCQNDASGTENIEEGNENNVDDNACQIDQEDIGGFAKDAGCFNLLKNSERQVGTPLEEDLGSWGHHFTSKSVPDAILQASAGDEVTFVFTNQVDGKLVPIESNVSPKTVESEEHNRNQPVNKRAFNKPQQRPREPLQPLSLNETTKRVKLSTYKRLHGNSNIDDAQIKMSLQRPNLVSVNHDDDFV.

Composition is skewed to acidic residues over residues Met-1–Ser-18 and Gln-26–Asp-39. The tract at residues Met-1–Asp-39 is disordered. The region spanning Leu-198–Gly-371 is the Helicase ATP-binding domain. Asp-211–Thr-218 provides a ligand contact to ATP. The DEAH box motif lies at Asp-322–His-325. A coiled-coil region spans residues Thr-396–Phe-417. A Helicase C-terminal domain is found at Val-538–Asn-696. The interval Val-828–Gln-861 is disordered.

Belongs to the SNF2/RAD54 helicase family. As to quaternary structure, interacts with RAD51. Binds to the geminivirus mungbean yellow mosaic virus (MYMV) and to the tomato leaf curl virus (ToLCV) replication-associated proteins. As to expression, expressed ubiquitously, with the highest levels of expression in flower buds. Present in flower buds (at protein level).

It is found in the nucleus. In terms of biological role, dissociates RAD51 from nucleoprotein filaments formed on dsDNA. Could be involved in the turnover of RAD51 protein-dsDNA filaments. Addition of RAD54 overcomes inhibition of DNA strand exchange by RAD51 bound to substrate dsDNA. Species preference in the RAD51 dissociation and DNA strand exchange assays underlines the importance of specific RAD54-RAD51 interactions. RAD51 is unable to release dsDNA upon ATP hydrolysis, leaving it stuck on the heteroduplex DNA product after DNA strand exchange. Involved in DNA repair and mitotic recombination. Functions in the homologous recombinational DNA repair (RAD52) pathway. Required for synthesis-dependent strand annealing (SDSA) during double-strand break repair. Functionally, facilitates geminiviral replication (e.g. geminivirus mungbean yellow mosaic virus (MYMV) and tomato leaf curl virus (ToLCV)). In Arabidopsis thaliana (Mouse-ear cress), this protein is Protein CHROMATIN REMODELING 25 (CHR25).